A 359-amino-acid polypeptide reads, in one-letter code: NAC domain-containing protein 45 (359 aa).

The 167-residue stretch at 19–185 (LPPGFRFHPT…EWVVCKVFHK (167 aa)) folds into the NAC domain. A DNA-binding region spans residues 130 to 191 (VGMKKTLVFY…VFHKKGDDRE (62 aa)).

As to expression, expressed in roots. Expressed at low levels in leaves, stems and panicles.

The protein localises to the nucleus. In terms of biological role, transcription activator involved in responses to drought stress and salt stress. Transactivates the stress response genes LEA19 and PM19L. The chain is NAC domain-containing protein 45 from Oryza sativa subsp. japonica (Rice).